The chain runs to 237 residues: Proteasome subunit beta 2 (237 aa).

Polar residues predominate over residues 1-14; it reads MNNWSQGSTPQGSD. Residues 1 to 42 constitute a propeptide, removed in mature form; by autocatalysis; the sequence is MNNWSQGSTPQGSDPSPYAPELGSLPDGSQSDDHGDTVNKTG. The interval 1–45 is disordered; the sequence is MNNWSQGSTPQGSDPSPYAPELGSLPDGSQSDDHGDTVNKTGTTT. T43 functions as the Nucleophile in the catalytic mechanism.

The protein belongs to the peptidase T1B family. The 20S proteasome core is composed of 14 alpha and 14 beta subunits that assemble into four stacked heptameric rings, resulting in a barrel-shaped structure. The two inner rings, each composed of seven catalytic beta subunits, are sandwiched by two outer rings, each composed of seven alpha subunits. The catalytic chamber with the active sites is on the inside of the barrel. Has a gated structure, the ends of the cylinder being occluded by the N-termini of the alpha-subunits. Is capped at one or both ends by the proteasome regulatory ATPase, PAN.

It localises to the cytoplasm. It catalyses the reaction Cleavage of peptide bonds with very broad specificity.. The formation of the proteasomal ATPase PAN-20S proteasome complex, via the docking of the C-termini of PAN into the intersubunit pockets in the alpha-rings, triggers opening of the gate for substrate entry. Interconversion between the open-gate and close-gate conformations leads to a dynamic regulation of the 20S proteasome proteolysis activity. Its function is as follows. Component of the proteasome core, a large protease complex with broad specificity involved in protein degradation. The sequence is that of Proteasome subunit beta 2 from Haloterrigena turkmenica (strain ATCC 51198 / DSM 5511 / JCM 9101 / NCIMB 13204 / VKM B-1734 / 4k) (Halococcus turkmenicus).